The sequence spans 124 residues: Small ribosomal subunit protein uS13 (124 aa).

Positions 94–117 (NLPVRGQRTRTNARTRKGPRKTVA) are enriched in basic residues. Residues 94 to 124 (NLPVRGQRTRTNARTRKGPRKTVANKKIESK) are disordered.

This sequence belongs to the universal ribosomal protein uS13 family. As to quaternary structure, part of the 30S ribosomal subunit. Forms a loose heterodimer with protein S19. Forms two bridges to the 50S subunit in the 70S ribosome.

Its function is as follows. Located at the top of the head of the 30S subunit, it contacts several helices of the 16S rRNA. In the 70S ribosome it contacts the 23S rRNA (bridge B1a) and protein L5 of the 50S subunit (bridge B1b), connecting the 2 subunits; these bridges are implicated in subunit movement. Contacts the tRNAs in the A and P-sites. The protein is Small ribosomal subunit protein uS13 of Mycoplasma pneumoniae (strain ATCC 29342 / M129 / Subtype 1) (Mycoplasmoides pneumoniae).